Here is a 103-residue protein sequence, read N- to C-terminus: Small ribosomal subunit protein bS20 (103 aa).

Residues 1 to 20 (MATAKPKKKNPRLASGRKRV) show a composition bias toward basic residues. The interval 1 to 31 (MATAKPKKKNPRLASGRKRVRQDTKLNAANT) is disordered.

Belongs to the bacterial ribosomal protein bS20 family.

Functionally, binds directly to 16S ribosomal RNA. The chain is Small ribosomal subunit protein bS20 from Polaromonas sp. (strain JS666 / ATCC BAA-500).